The following is a 423-amino-acid chain: Gamma-glutamyl phosphate reductase (423 aa).

Belongs to the gamma-glutamyl phosphate reductase family.

The protein resides in the cytoplasm. The enzyme catalyses L-glutamate 5-semialdehyde + phosphate + NADP(+) = L-glutamyl 5-phosphate + NADPH + H(+). It participates in amino-acid biosynthesis; L-proline biosynthesis; L-glutamate 5-semialdehyde from L-glutamate: step 2/2. In terms of biological role, catalyzes the NADPH-dependent reduction of L-glutamate 5-phosphate into L-glutamate 5-semialdehyde and phosphate. The product spontaneously undergoes cyclization to form 1-pyrroline-5-carboxylate. The polypeptide is Gamma-glutamyl phosphate reductase (Pseudomonas fluorescens (strain Pf0-1)).